Consider the following 733-residue polypeptide: Forkhead box protein K1 (733 aa).

A2 is modified (N-acetylalanine). The tract at residues 2 to 40 (AEVGEDSGARALLALRSAPCSPVLCAAAAAAAFPAAAPP) is interaction with SIN3A and SIN3B. The segment at 36-79 (AAAPPPAPAQPQPPPGPPPPPPPPLPPGAIAGAGSSGGSSGVSG) is disordered. Positions 37–62 (AAPPPAPAQPQPPPGPPPPPPPPLPP) are enriched in pro residues. A required for interaction with FOXO4 and MEF2C region spans residues 95–420 (AASVRQSPGP…PLSSRSAPAS (326 aa)). Residue S101 is modified to Phosphoserine. The FHA domain occupies 123 to 175 (VTIGRNSSQGSVDLSMGLSSFISRRHLQLSFQEPHFYLRCLGKNGVFVDGAFQ). An omega-N-methylarginine mark is found at R161 and R191. Residues S213, S223, S239, and S243 each carry the phosphoserine modification. A phosphothreonine mark is found at T245 and T247. S253, S257, S295, and S299 each carry phosphoserine. 2 disordered regions span residues 287 to 306 (ASEQ…ESKP) and 413 to 436 (SSRS…GLQT). The segment at residues 305–400 (KPPFSYAQLI…EQAFRKRRQR (96 aa)) is a DNA-binding region (fork-head). Phosphoserine occurs at positions 416 and 420. T422 carries the phosphothreonine modification. S428 is subject to Phosphoserine. T436 is modified (phosphothreonine). A phosphoserine mark is found at S441, S445, and S459. Low complexity predominate over residues 676-697 (VAATATTTPATATTASASASST). A disordered region spans residues 676–733 (VAATATTTPATATTASASASSTGEPEVKRSRVEEPSGAVTTPAGVIAAAGPQGPGTGE). A compositionally biased stretch (basic and acidic residues) spans 700-709 (PEVKRSRVEE).

As to quaternary structure, interacts with SIN3A and SIN3B (via PAH2) to form a complex which represses transcription. Component of SIN3A-, but not SIN3B-, containing multiprotein complexes. Interacts with FOXO4 and MEF2C; both interactions inhibit FOXO4 and MEF2C transactivation activity. Interacts (when phosphorylated) with YWHAE/14-3-3-epsilon; promotes sequestration in the cytoplasm and leads to impaired ability to bind DNA. Interacts with FHL2. Interacts with SRF. Interacts with DVL2 and DVL3; the interaction induces DVL2 nuclear translocation. Interacts with BAP1 (when phosphorylated). Accessory component of the polycomb repressive deubiquitinase (PR-DUB) complex, at least composed of BAP1, one of ASXL1, ASXL2 or (probably) ASXL3 and one of MBD5 or MBD6. The PR-DUB core associates with a number of accessory proteins, including FOXK1, FOXK2, KDM1B, HCFC1 and OGT. Post-translationally, phosphorylation by GSK3 (GSK3A or GSK3B) promotes interaction with YWHAE/14-3-3-epsilon and retention in the cytoplasm. In response to mTORC1 signaling, phosphorylation by GSK3 is prevented, leading to translocation to the nucleus. As to expression, expressed both developing and adult tissues. In adults, significant expression is seen in tumors of the brain, colon and lymph node.

The protein localises to the nucleus. Its subcellular location is the cytoplasm. Functionally, transcriptional regulator involved in different processes such as glucose metabolism, aerobic glycolysis, muscle cell differentiation and autophagy. Recognizes and binds the forkhead DNA sequence motif (5'-GTAAACA-3') and can both act as a transcription activator or repressor, depending on the context. Together with FOXK2, acts as a key regulator of metabolic reprogramming towards aerobic glycolysis, a process in which glucose is converted to lactate in the presence of oxygen. Acts by promoting expression of enzymes for glycolysis (such as hexokinase-2 (HK2), phosphofructokinase, pyruvate kinase (PKLR) and lactate dehydrogenase), while suppressing further oxidation of pyruvate in the mitochondria by up-regulating pyruvate dehydrogenase kinases PDK1 and PDK4. Probably plays a role in gluconeogenesis during overnight fasting, when lactate from white adipose tissue and muscle is the main substrate. Involved in mTORC1-mediated metabolic reprogramming: in response to mTORC1 signaling, translocates into the nucleus and regulates the expression of genes associated with glycolysis and downstream anabolic pathways, such as HIF1A, thereby regulating glucose metabolism. Together with FOXK2, acts as a negative regulator of autophagy in skeletal muscle: in response to starvation, enters the nucleus, binds the promoters of autophagy genes and represses their expression, preventing proteolysis of skeletal muscle proteins. Acts as a transcriptional regulator of the myogenic progenitor cell population in skeletal muscle. Binds to the upstream enhancer region (CCAC box) of myoglobin (MB) gene, regulating the myogenic progenitor cell population. Promotes muscle progenitor cell proliferation by repressing the transcriptional activity of FOXO4, thereby inhibiting myogenic differentiation. Involved in remodeling processes of adult muscles that occur in response to physiological stimuli. Required to correct temporal orchestration of molecular and cellular events necessary for muscle repair. Represses myogenic differentiation by inhibiting MEFC activity. Positively regulates Wnt/beta-catenin signaling by translocating DVL into the nucleus. Reduces virus replication, probably by binding the interferon stimulated response element (ISRE) to promote antiviral gene expression. Accessory component of the polycomb repressive deubiquitinase (PR-DUB) complex; recruits the PR-DUB complex to specific FOXK1-bound genes. The polypeptide is Forkhead box protein K1 (Homo sapiens (Human)).